The chain runs to 276 residues: Urease accessory protein UreD (276 aa).

This sequence belongs to the UreD family. As to quaternary structure, ureD, UreF and UreG form a complex that acts as a GTP-hydrolysis-dependent molecular chaperone, activating the urease apoprotein by helping to assemble the nickel containing metallocenter of UreC. The UreE protein probably delivers the nickel.

Its subcellular location is the cytoplasm. Functionally, required for maturation of urease via the functional incorporation of the urease nickel metallocenter. The polypeptide is Urease accessory protein UreD (Polaromonas naphthalenivorans (strain CJ2)).